The sequence spans 70 residues: uncharacterized protein (70 aa).

This is an uncharacterized protein from Rickettsia conorii (strain ATCC VR-613 / Malish 7).